A 519-amino-acid chain; its full sequence is Bifunctional purine biosynthesis protein PurH (519 aa).

The region spanning 1–147 (MAKITRALIS…KNNHDVTVLV (147 aa)) is the MGS-like domain.

The protein belongs to the PurH family.

The catalysed reaction is (6R)-10-formyltetrahydrofolate + 5-amino-1-(5-phospho-beta-D-ribosyl)imidazole-4-carboxamide = 5-formamido-1-(5-phospho-D-ribosyl)imidazole-4-carboxamide + (6S)-5,6,7,8-tetrahydrofolate. It catalyses the reaction IMP + H2O = 5-formamido-1-(5-phospho-D-ribosyl)imidazole-4-carboxamide. It participates in purine metabolism; IMP biosynthesis via de novo pathway; 5-formamido-1-(5-phospho-D-ribosyl)imidazole-4-carboxamide from 5-amino-1-(5-phospho-D-ribosyl)imidazole-4-carboxamide (10-formyl THF route): step 1/1. The protein operates within purine metabolism; IMP biosynthesis via de novo pathway; IMP from 5-formamido-1-(5-phospho-D-ribosyl)imidazole-4-carboxamide: step 1/1. The sequence is that of Bifunctional purine biosynthesis protein PurH from Trichlorobacter lovleyi (strain ATCC BAA-1151 / DSM 17278 / SZ) (Geobacter lovleyi).